The following is a 40-amino-acid chain: Photosystem II reaction center protein J (40 aa).

The helical transmembrane segment at 8–28 (IPLWVIGTVAGILVIGLIGIF) threads the bilayer.

It belongs to the PsbJ family. In terms of assembly, PSII is composed of 1 copy each of membrane proteins PsbA, PsbB, PsbC, PsbD, PsbE, PsbF, PsbH, PsbI, PsbJ, PsbK, PsbL, PsbM, PsbT, PsbX, PsbY, PsbZ, Psb30/Ycf12, at least 3 peripheral proteins of the oxygen-evolving complex and a large number of cofactors. It forms dimeric complexes.

The protein localises to the plastid. It is found in the chloroplast thylakoid membrane. Its function is as follows. One of the components of the core complex of photosystem II (PSII). PSII is a light-driven water:plastoquinone oxidoreductase that uses light energy to abstract electrons from H(2)O, generating O(2) and a proton gradient subsequently used for ATP formation. It consists of a core antenna complex that captures photons, and an electron transfer chain that converts photonic excitation into a charge separation. The protein is Photosystem II reaction center protein J of Lepidium virginicum (Virginia pepperweed).